Reading from the N-terminus, the 380-residue chain is Chaperone protein DnaJ (380 aa).

A J domain is found at 5–69 (DFYEVLGVGR…QKKAAYDQYG (65 aa)). A CR-type zinc finger spans residues 135-213 (GCSKEIRVPT…CHGQGRVEKT (79 aa)). The Zn(2+) site is built by Cys-148, Cys-151, Cys-165, Cys-168, Cys-187, Cys-190, Cys-201, and Cys-204. CXXCXGXG motif repeat units lie at residues 148–155 (CDSCDGSG), 165–172 (CGTCHGQG), 187–194 (CPHCHGRG), and 201–208 (CNSCHGQG).

The protein belongs to the DnaJ family. Homodimer. It depends on Zn(2+) as a cofactor.

It localises to the cytoplasm. Participates actively in the response to hyperosmotic and heat shock by preventing the aggregation of stress-denatured proteins and by disaggregating proteins, also in an autonomous, DnaK-independent fashion. Unfolded proteins bind initially to DnaJ; upon interaction with the DnaJ-bound protein, DnaK hydrolyzes its bound ATP, resulting in the formation of a stable complex. GrpE releases ADP from DnaK; ATP binding to DnaK triggers the release of the substrate protein, thus completing the reaction cycle. Several rounds of ATP-dependent interactions between DnaJ, DnaK and GrpE are required for fully efficient folding. Also involved, together with DnaK and GrpE, in the DNA replication of plasmids through activation of initiation proteins. The chain is Chaperone protein DnaJ from Photobacterium profundum (strain SS9).